A 1235-amino-acid polypeptide reads, in one-letter code: ATP-dependent helicase/nuclease subunit A (1235 aa).

The 473-residue stretch at 10-482 (SIWTDDQWSA…IDLNQNFRSR (473 aa)) folds into the UvrD-like helicase ATP-binding domain. An ATP-binding site is contributed by 31-38 (AAAGSGKT). Residues 509 to 799 (QAALKLGASY…RLMTIHSSKG (291 aa)) form the UvrD-like helicase C-terminal domain.

Belongs to the helicase family. AddA subfamily. As to quaternary structure, heterodimer of AddA and AddB/RexB. Mg(2+) is required as a cofactor.

The catalysed reaction is Couples ATP hydrolysis with the unwinding of duplex DNA by translocating in the 3'-5' direction.. It carries out the reaction ATP + H2O = ADP + phosphate + H(+). Its function is as follows. The heterodimer acts as both an ATP-dependent DNA helicase and an ATP-dependent, dual-direction single-stranded exonuclease. Recognizes the chi site generating a DNA molecule suitable for the initiation of homologous recombination. The AddA nuclease domain is required for chi fragment generation; this subunit has the helicase and 3' -&gt; 5' nuclease activities. This chain is ATP-dependent helicase/nuclease subunit A, found in Bacillus velezensis (strain DSM 23117 / BGSC 10A6 / LMG 26770 / FZB42) (Bacillus amyloliquefaciens subsp. plantarum).